The sequence spans 189 residues: Elongation factor P (189 aa).

The protein belongs to the elongation factor P family.

It is found in the cytoplasm. Its pathway is protein biosynthesis; polypeptide chain elongation. Functionally, involved in peptide bond synthesis. Stimulates efficient translation and peptide-bond synthesis on native or reconstituted 70S ribosomes in vitro. Probably functions indirectly by altering the affinity of the ribosome for aminoacyl-tRNA, thus increasing their reactivity as acceptors for peptidyl transferase. The chain is Elongation factor P from Rhizobium radiobacter (Agrobacterium tumefaciens).